We begin with the raw amino-acid sequence, 677 residues long: Levanase (677 aa).

An N-terminal signal peptide occupies residues methionine 1 to alanine 24. Substrate-binding positions include tryptophan 46 to aspartate 49, glutamine 65, tryptophan 73, phenylalanine 105 to serine 106, arginine 171 to aspartate 172, glutamate 223, and tryptophan 313. Residue aspartate 49 is part of the active site.

This sequence belongs to the glycosyl hydrolase 32 family.

Its subcellular location is the secreted. The enzyme catalyses Hydrolysis of terminal, non-reducing (2-&gt;1)- and (2-&gt;6)-linked beta-D-fructofuranose residues in fructans.. Its activity is regulated as follows. Is completely inhibited by Ag(+) and Hg(2+) ions. Exo-fructosidase that can hydrolyze both levan and inulin, leading to the production of free fructose. Is also able to hydrolyze sucrose and to a small extent raffinose, but not melezitose, stachylose, cellobiose, maltose, and lactose. The protein is Levanase (sacC) of Bacillus subtilis (strain 168).